The chain runs to 944 residues: Weak acid resistance protein 1 (944 aa).

The zn(2)-C6 fungal-type DNA-binding region spans 76-109 (CVCCHSLKQKCEPSDVNDIYRKPCRRCLKHKKLC). Disordered regions lie at residues 114–171 (SKRT…AKQF) and 197–225 (SYGA…SVPT). Threonine 128 carries the phosphothreonine modification. Polar residues-rich tracts occupy residues 135 to 144 (VNVSTKSKGP) and 205 to 225 (TTST…SVPT).

As to quaternary structure, homodimer. Post-translationally, phosphorylation is required for PDR12 induction.

It localises to the nucleus. Its function is as follows. transcription factor which binds to a weak acid response element (WARE) to mediate stress induction of PDR12 and FUN34, encoding an acid transporter and a putative ammonia transporter, respectively. The chain is Weak acid resistance protein 1 (WAR1) from Saccharomyces cerevisiae (strain ATCC 204508 / S288c) (Baker's yeast).